The chain runs to 321 residues: MLSYDRILNFVIGARGIGKSYAMKKHPIKRFIKHGEQFIYVRRYKPELKKIGNYFNDIAQEFPNHEFKVKGRQFCIDGKLTGWAIPLSAWQSEKSNAYPMVTTIIFDEFIRERDNSGYIPNEVDALLNLMDTVFRTRENGRCICLSNAVSIINPYFVYFGLVPDINKRFNAYKHILIEIPDSKDFSDERRKTKFGQLIDGTEYGEMSLDNEFVNDSDVFIEKRSKNSKFVFSIVYKGMRMGVWVDTQQMLLYLTTDHDPSTKNVYALTADDLEEGMILVSNYKKNYHIRKLCSAFMNGQLRFDNQLMRTIGYEMFKKMRVQ.

Residues 1–196 form an ATPase region; it reads MLSYDRILNF…DERRKTKFGQ (196 aa). An ATP-binding site is contributed by 13-20; that stretch reads GARGIGKS. Residues 222-321 are DNA-binding; the sequence is KRSKNSKFVF…YEMFKKMRVQ (100 aa).

Belongs to the phi29likevirus gp16 family. As to quaternary structure, homopentamer. Interacts with the packaging RNA (pRNA). Part of a DNA-gp3-gp16 complex.

The enzyme catalyses ATP + H2O = ADP + phosphate + H(+). Functionally, ATPase required for the genome encapsidation reaction. Part of the active packaging motor via the binding to the packaging RNA (pRNA), itself fixed to the head-tail connector at the unique portal vertex of the prohead. Binds and supercoils the pre-formed, unit-length DNA bound to gp3 to produce an initiation complex for DNA packaging. Provides the energy to actively pump the viral DNA into the prohead. Approximately one molecule of ATP is used in the packaging of 2 bp of viral DNA. ATP hydrolysis results in a conformational change that causes the arginine/lysine finger of one subunit to move into the active site of its neighbor, where it interacts with the negatively charged oxygens on the gamma-phosphate of ATP. After packaging, the ATPase and the pRNA are released from the prohead. This is DNA packaging protein (16) from Bacillus subtilis (Bacteriophage B103).